The chain runs to 248 residues: MPVKLSVNLNAVAMLRNRRDLPWPSVTALGRIALGAGAHGLTVHPRPDQRHIRFSDLPHIRALIDDEFPDREFNIEGYPSEDFLRLVEETQPEQVTLVPDDPSQATSDHGWQFQEHERFLAAAVGRLKRRGFRVSLFADPDADEAALAVAKAVGADRVELYTGPYGACYDDAEKAAKELRKLEKTAKTAQGLGLAVNAGHDLTVANLPALVEHVPSLAEVSIGHALTADALEYGMAETVRRYLSACEA.

2 residues coordinate 3-amino-2-oxopropyl phosphate: Asn-8 and Arg-19. His-44 (proton acceptor) is an active-site residue. 1-deoxy-D-xylulose 5-phosphate-binding residues include Arg-46 and His-51. Glu-76 acts as the Proton acceptor in catalysis. Thr-106 lines the 1-deoxy-D-xylulose 5-phosphate pocket. His-200 serves as the catalytic Proton donor. Residues Asp-201 and 223 to 224 (GH) contribute to the 3-amino-2-oxopropyl phosphate site.

The protein belongs to the PNP synthase family. Homooctamer; tetramer of dimers.

It localises to the cytoplasm. It carries out the reaction 3-amino-2-oxopropyl phosphate + 1-deoxy-D-xylulose 5-phosphate = pyridoxine 5'-phosphate + phosphate + 2 H2O + H(+). It functions in the pathway cofactor biosynthesis; pyridoxine 5'-phosphate biosynthesis; pyridoxine 5'-phosphate from D-erythrose 4-phosphate: step 5/5. Functionally, catalyzes the complicated ring closure reaction between the two acyclic compounds 1-deoxy-D-xylulose-5-phosphate (DXP) and 3-amino-2-oxopropyl phosphate (1-amino-acetone-3-phosphate or AAP) to form pyridoxine 5'-phosphate (PNP) and inorganic phosphate. This is Pyridoxine 5'-phosphate synthase from Chelativorans sp. (strain BNC1).